Reading from the N-terminus, the 87-residue chain is MNSKIFAVLLLLAFLSCVLSDQYCPKSSITACKKMNIRNDCCKDDDCTGGSWCCATPCGNFCKYPTDRPGGKRAAGGKSCKTGYVYY.

Residues 1–20 form the signal peptide; it reads MNSKIFAVLLLLAFLSCVLS. A WAP domain is found at 21-66; that stretch reads DQYCPKSSITACKKMNIRNDCCKDDDCTGGSWCCATPCGNFCKYPT. 5 cysteine pairs are disulfide-bonded: cysteine 24–cysteine 54, cysteine 32–cysteine 58, cysteine 41–cysteine 53, cysteine 42–cysteine 80, and cysteine 47–cysteine 62.

Belongs to the venom protein 11 family. 01 (wap-1) subfamily. In terms of processing, contains 5 disulfide bonds. As to expression, expressed by the venom gland.

The protein resides in the secreted. Functionally, has antibacterial activity. This is U15-lycotoxin-Ls1f from Lycosa singoriensis (Wolf spider).